Reading from the N-terminus, the 452-residue chain is cAMP-dependent protein kinase regulatory subunit (452 aa).

The dimerization and phosphorylation stretch occupies residues 28–212; it reads QFCANYFNSK…ELSKTLGSNF (185 aa). The segment at 74-163 is disordered; that stretch reads IMTTNKRQPS…APPVPKSKIP (90 aa). The segment covering 75–84 has biased composition (polar residues); sequence MTTNKRQPSF. Over residues 95–106 the composition is skewed to basic and acidic residues; that stretch reads SIDHHHDDDPKE. A Phosphoserine modification is found at S173. Residues 213 to 330 and 333 to 451 contribute to the a nucleoside 3',5'-cyclic phosphate site; these read LFRQ…FLKD and VLSS…QGSS. 4 residues coordinate 3',5'-cyclic AMP: E278, R287, E399, and R408.

The protein belongs to the cAMP-dependent kinase regulatory chain family. In terms of assembly, tetramer, composed of 2 regulatory (R) and 2 catalytic (C) subunits. In the presence of cAMP it dissociates into 2 active monomeric C subunits and an R dimer.

The protein is cAMP-dependent protein kinase regulatory subunit (PKAR) of Debaryomyces hansenii (strain ATCC 36239 / CBS 767 / BCRC 21394 / JCM 1990 / NBRC 0083 / IGC 2968) (Yeast).